Here is a 378-residue protein sequence, read N- to C-terminus: Phosphatidyl-myo-inositol mannosyltransferase (378 aa).

GDP-alpha-D-mannose contacts are provided by tyrosine 9 and glycine 16. A 1,2-diacyl-sn-glycero-3-phospho-(1D-myo-inositol) is bound by residues glutamine 18, 62–63, and arginine 68; that span reads YN. Residues arginine 196, 201-202, 251-253, lysine 256, 274-278, and glutamate 282 contribute to the GDP-alpha-D-mannose site; these read RK, VDD, and ESFGI.

The protein belongs to the glycosyltransferase group 1 family. Monomer. Mg(2+) serves as cofactor.

It localises to the cell membrane. The enzyme catalyses a 1,2-diacyl-sn-glycero-3-phospho-(1D-myo-inositol) + GDP-alpha-D-mannose = a 1,2-diacyl-sn-glycero-3-phospho-[alpha-D-mannopyranosyl-(1&lt;-&gt;6)-D-myo-inositol] + GDP + H(+). The protein operates within phospholipid metabolism; phosphatidylinositol metabolism. Functionally, involved in the biosynthesis of phosphatidyl-myo-inositol mannosides (PIM) which are early precursors in the biosynthesis of lipomannans (LM) and lipoarabinomannans (LAM). Catalyzes the addition of a mannosyl residue from GDP-D-mannose (GDP-Man) to the position 2 of the carrier lipid phosphatidyl-myo-inositol (PI) to generate a phosphatidyl-myo-inositol bearing an alpha-1,2-linked mannose residue (PIM1). In Mycobacterium bovis (strain ATCC BAA-935 / AF2122/97), this protein is Phosphatidyl-myo-inositol mannosyltransferase.